The following is a 527-amino-acid chain: MSTYGTLLKVTSYGESHGKAIGCVIDGFLSNIEINFDLIQKQLDRRRPNQSKLTSNRNEKDKLVILSGFDENKTLGTPITFLIYNEDIKKEDYNSFINIPRPGHGDYTYFMKYHVKNKSGSSRFSGRETATRVAAGACIEQWLYKSYNCSIVSYVHSVGNIKIPEQVSKELENKNPPSRDLVDSYGTVRYNEKEKIFMDCFNRIYDMNASMLKTDEYNKNTLTIPSIDNTYINVKTNECNINQVDNNHNNYINDKDNTFNNSEKSDEWIYLQTRCPHPYTAVQICSYILKLKNKGDSVGGIATCIIQNPPIGIGEPIFDKLEAELAKMILSIPAVKGIEFGSGFNGTYMFGSMHNDIFIPVENMSTKKESDLLYDDKGECKNMSYHSTIQNNEDQILNSTKGFMPPKNDKNFNNIDDYNVTFNNNEEKLLITKTNNCGGILAGISTGNNIVFRSAIKPVSSIQIEKETSDFYGNMCNLKVQGRHDSCILPRLPPIIEASSSMVIGDLILRQISKYGDKKLPTLFRNM.

Active-site residues include histidine 17, histidine 104, and aspartate 485.

Belongs to the chorismate synthase family.

Its subcellular location is the cytoplasm. The protein localises to the cytosol. It carries out the reaction 5-O-(1-carboxyvinyl)-3-phosphoshikimate = chorismate + phosphate. It catalyses the reaction FMNH2 + NADP(+) = FMN + NADPH + 2 H(+). It functions in the pathway metabolic intermediate biosynthesis; chorismate biosynthesis; chorismate from D-erythrose 4-phosphate and phosphoenolpyruvate: step 7/7. In terms of biological role, bifunctional chorismate synthase and flavin reductase. Catalyzes the conversion of 5-enolpyruvylshikimate 3-phosphate (EPSP) to form chorismate. Acts also as a flavin reductase (FR) able to generate reduced flavin mononucleotide in the presence of NADPH. The protein is Chorismate synthase of Plasmodium falciparum (isolate 3D7).